The primary structure comprises 317 residues: Ataxin-3 homolog (317 aa).

Residues 7 to 178 (INSIFFEHQE…RSDADDLISL (172 aa)) enclose the Josephin domain. Catalysis depends on cysteine 20, which acts as the Nucleophile. Histidine 117 (proton acceptor) is an active-site residue. The active site involves asparagine 132. UIM domains are found at residues 219–239 (SQEE…KDGS) and 247–264 (EIDE…QAPG). The interval 254–317 (RKAIELSQAP…KKKEERNDEK (64 aa)) is disordered. Residues 276–293 (RSRSSTPPGASEPFSNAE) are compositionally biased toward polar residues. Residues 294–317 (QQRRDRQKFLERFEKKKEERNDEK) show a composition bias toward basic and acidic residues. The interaction with cdc-48.1 and cdc-48.2 stretch occupies residues 296-299 (RRDR).

Forms a complex composed of deubiquitinating enzyme atx-3, adapter ubxn-5 and cdc-48.1. Forms a complex composed of deubiquitinating enzyme atx-3, E4 ubiquitin-protein ligase ufd-2 and cdc-48.1. Interacts (via RRDR motif) with cdc-48.1 (via N-terminus) and cdc-48.2 (via N-terminus); the interaction with cdc-48.1 is not required for atx-3 enzymatic activity. Interacts (via C-terminus) with ubxn-5. May interact with ned-8. As to expression, expressed in germline (at protein level). Expressed in spermatheca, pharynx, dorsal and ventral cords, some head neurons, hypodermis, body wall muscles and coelomocytes.

The protein resides in the cytoplasm. Its subcellular location is the nucleus. The protein localises to the nucleolus. The catalysed reaction is Thiol-dependent hydrolysis of ester, thioester, amide, peptide and isopeptide bonds formed by the C-terminal Gly of ubiquitin (a 76-residue protein attached to proteins as an intracellular targeting signal).. Acts as a chain editing deubiquitinating enzyme that binds and cleaves 'Lys-48'-linked polyubiquitin chains, with a preference for chains containing four or more ubiquitin molecules thereby modulating protein degradation by the ubiquitin-proteasome pathway. Probably by regulating the IGF-1-insulin-like pathway, regulates lifespan. Regulates germline DNA double-strand-break repair and apoptosis in response to DNA damage by recruiting E4 ubiquitin-protein ligase ufd-2 to DNA repair foci. Interacts with key regulators of transcription and represses transcription. Acts as a histone-binding protein that regulates transcription. The polypeptide is Ataxin-3 homolog (atx-3) (Caenorhabditis elegans).